Reading from the N-terminus, the 393-residue chain is Arginine biosynthesis bifunctional protein ArgJ 3 (393 aa).

Threonine 148, lysine 170, threonine 181, glutamate 260, asparagine 388, and threonine 393 together coordinate substrate. Residue threonine 181 is the Nucleophile of the active site.

It belongs to the ArgJ family. As to quaternary structure, heterotetramer of two alpha and two beta chains.

It localises to the cytoplasm. It catalyses the reaction N(2)-acetyl-L-ornithine + L-glutamate = N-acetyl-L-glutamate + L-ornithine. The catalysed reaction is L-glutamate + acetyl-CoA = N-acetyl-L-glutamate + CoA + H(+). Its pathway is amino-acid biosynthesis; L-arginine biosynthesis; L-ornithine and N-acetyl-L-glutamate from L-glutamate and N(2)-acetyl-L-ornithine (cyclic): step 1/1. It participates in amino-acid biosynthesis; L-arginine biosynthesis; N(2)-acetyl-L-ornithine from L-glutamate: step 1/4. Functionally, catalyzes two activities which are involved in the cyclic version of arginine biosynthesis: the synthesis of N-acetylglutamate from glutamate and acetyl-CoA as the acetyl donor, and of ornithine by transacetylation between N(2)-acetylornithine and glutamate. The sequence is that of Arginine biosynthesis bifunctional protein ArgJ 3 from Streptomyces clavuligerus.